Here is a 338-residue protein sequence, read N- to C-terminus: tRNA N6-adenosine threonylcarbamoyltransferase (338 aa).

H114 and H118 together coordinate Fe cation. Residues L136–G140, D169, G182, D186, and N275 contribute to the substrate site. A Fe cation-binding site is contributed by D301.

This sequence belongs to the KAE1 / TsaD family. The cofactor is Fe(2+).

It is found in the cytoplasm. It catalyses the reaction L-threonylcarbamoyladenylate + adenosine(37) in tRNA = N(6)-L-threonylcarbamoyladenosine(37) in tRNA + AMP + H(+). In terms of biological role, required for the formation of a threonylcarbamoyl group on adenosine at position 37 (t(6)A37) in tRNAs that read codons beginning with adenine. Is involved in the transfer of the threonylcarbamoyl moiety of threonylcarbamoyl-AMP (TC-AMP) to the N6 group of A37, together with TsaE and TsaB. TsaD likely plays a direct catalytic role in this reaction. This Streptococcus equi subsp. zooepidemicus (strain MGCS10565) protein is tRNA N6-adenosine threonylcarbamoyltransferase.